Here is a 721-residue protein sequence, read N- to C-terminus: Polyribonucleotide nucleotidyltransferase (721 aa).

Residues aspartate 495 and aspartate 501 each coordinate Mg(2+). A KH domain is found at 562–621 (PRLLSFRIDPELIGTVIGPGGRTIKGITERTNTKIDIEDSGIVTIASHDGAAADEAQKII). Positions 631-699 (GEVFSGSITR…NRGRINLTLR (69 aa)) constitute an S1 motif domain. The interval 698 to 721 (LRGVPQSGDGAGEEPQPTPVAPLS) is disordered.

It belongs to the polyribonucleotide nucleotidyltransferase family. It depends on Mg(2+) as a cofactor.

It localises to the cytoplasm. It carries out the reaction RNA(n+1) + phosphate = RNA(n) + a ribonucleoside 5'-diphosphate. Functionally, involved in mRNA degradation. Catalyzes the phosphorolysis of single-stranded polyribonucleotides processively in the 3'- to 5'-direction. In Parasynechococcus marenigrum (strain WH8102), this protein is Polyribonucleotide nucleotidyltransferase.